Consider the following 614-residue polypeptide: Fimbrin (614 aa).

EF-hand domains are found at residues Glu-16–Lys-50 and Gly-51–Gly-86. Residues Asp-29, Asp-31, Tyr-35, Thr-40, Asp-66, Ser-68, Arg-70, and Asp-75 each coordinate Ca(2+). Actin-binding stretches follow at residues Thr-98–Pro-368 and Leu-369–Val-614. 4 Calponin-homology (CH) domains span residues Glu-112–Leu-233, Leu-261–Pro-364, Glu-385–Ile-495, and Thr-508–Val-614.

The protein resides in the cytoplasm. Its subcellular location is the cytoskeleton. It is found in the actin patch. Functionally, binds to actin, and functionally associates with actin structures involved in the development and maintenance of cell polarity. Plays a role in cytokinesis. Plays important roles in mating and in spore formation. This Schizosaccharomyces pombe (strain 972 / ATCC 24843) (Fission yeast) protein is Fimbrin (fim1).